Here is a 244-residue protein sequence, read N- to C-terminus: Mono-ADP-ribosyltransferase C3 (244 aa).

Positions 1–40 (MKGIRKSILCLVLSAGVIAPVTTSIVQSPQKCYACTVDKG) are cleaved as a signal peptide. The TR mART core domain maps to 44–244 (DTFTEFTNVE…QIMITAMIFK (201 aa)). NAD(+) is bound by residues Thr-80, Asn-87, Arg-91, 128–131 (RGDD), and 167–169 (RTE). Arg-128 is a catalytic residue. Ser-174 is a catalytic residue. Residues 182–185 (FGGR) and 211–213 (QLE) each bind NAD(+). Residue Glu-213 is part of the active site.

The protein to exoenzymes 3 of C.limosum and C.botulinum D phage, and to S.aureus ediN. As to quaternary structure, monomer.

The protein resides in the secreted. The enzyme catalyses L-asparaginyl-[protein] + NAD(+) = N(4)-(ADP-D-ribosyl)-L-asparaginyl-[protein] + nicotinamide + H(+). In terms of biological role, ADP-ribosylates eukaryotic Rho and Rac proteins on an asparagine residue. The protein is Mono-ADP-ribosyltransferase C3 of Clostridium botulinum C phage (Clostridium botulinum C bacteriophage).